We begin with the raw amino-acid sequence, 488 residues long: Stromelysin-3 (488 aa).

The N-terminal stretch at 1–31 (MAPAAWLRSAAARALLPPMLLLLLQPPPLLA) is a signal peptide. Residues 32–97 (RALPPDAHHL…GLSARNRQKR (66 aa)) constitute a propeptide, activation peptide. The segment at 41–93 (LHAERRGPQPWHAALPSSPAPAPATQEAPRPASSLRPPRCGVPDPSDGLSARN) is disordered. The segment covering 50–79 (PWHAALPSSPAPAPATQEAPRPASSLRPPR) has biased composition (low complexity). A Cysteine switch motif is present at residues 78-85 (PRCGVPDP). Positions 80 and 166 each coordinate Zn(2+). Residues Asp-171, Gly-172, Gly-174, and Ile-176 each coordinate Ca(2+). Positions 179, 192, and 215 each coordinate Zn(2+). Glu-216 is a catalytic residue. Zn(2+)-binding residues include His-219 and His-225. Hemopexin repeat units lie at residues 291–339 (PDAC…WQGL), 340–382 (PSPV…ELGL), 384–432 (RFPV…WRGV), and 433–480 (PSEI…FFGC). Cys-294 and Cys-480 form a disulfide bridge.

Belongs to the peptidase M10A family. Ca(2+) is required as a cofactor. Requires Zn(2+) as cofactor. Post-translationally, the precursor is cleaved by a furin endopeptidase. As to expression, specifically expressed in stromal cells of breast carcinomas.

It is found in the secreted. Its subcellular location is the extracellular space. The protein resides in the extracellular matrix. May play an important role in the progression of epithelial malignancies. This is Stromelysin-3 (MMP11) from Homo sapiens (Human).